Reading from the N-terminus, the 207-residue chain is Small ribosomal subunit protein uS4 (207 aa).

Residues 30–53 (DKSKFDTKPGQHGRTSGQRTSDFG) form a disordered region. Polar residues predominate over residues 42-52 (GRTSGQRTSDF). Positions 97–157 (SRLDNVVYRM…EKSKKQARIV (61 aa)) constitute an S4 RNA-binding domain.

It belongs to the universal ribosomal protein uS4 family. In terms of assembly, part of the 30S ribosomal subunit. Contacts protein S5. The interaction surface between S4 and S5 is involved in control of translational fidelity.

Functionally, one of the primary rRNA binding proteins, it binds directly to 16S rRNA where it nucleates assembly of the body of the 30S subunit. With S5 and S12 plays an important role in translational accuracy. The polypeptide is Small ribosomal subunit protein uS4 (Delftia acidovorans (strain DSM 14801 / SPH-1)).